A 334-amino-acid chain; its full sequence is Ornithine carbamoyltransferase (334 aa).

Carbamoyl phosphate is bound by residues 57–60 (STRT), glutamine 84, arginine 108, and 135–138 (HPTQ). L-ornithine-binding positions include asparagine 169, aspartate 233, and 237-238 (SM). Carbamoyl phosphate-binding positions include 275-276 (CL) and arginine 320.

Belongs to the aspartate/ornithine carbamoyltransferase superfamily. OTCase family.

It localises to the cytoplasm. It catalyses the reaction carbamoyl phosphate + L-ornithine = L-citrulline + phosphate + H(+). It functions in the pathway amino-acid biosynthesis; L-arginine biosynthesis; L-arginine from L-ornithine and carbamoyl phosphate: step 1/3. Its function is as follows. Reversibly catalyzes the transfer of the carbamoyl group from carbamoyl phosphate (CP) to the N(epsilon) atom of ornithine (ORN) to produce L-citrulline. The chain is Ornithine carbamoyltransferase from Vibrio parahaemolyticus serotype O3:K6 (strain RIMD 2210633).